A 258-amino-acid polypeptide reads, in one-letter code: UPF0246 protein VP0504 (258 aa).

The protein belongs to the UPF0246 family.

The chain is UPF0246 protein VP0504 from Vibrio parahaemolyticus serotype O3:K6 (strain RIMD 2210633).